The sequence spans 50 residues: Large ribosomal subunit protein bL33B (50 aa).

This sequence belongs to the bacterial ribosomal protein bL33 family.

This chain is Large ribosomal subunit protein bL33B, found in Ligilactobacillus salivarius (strain UCC118) (Lactobacillus salivarius).